Consider the following 151-residue polypeptide: Acidic phospholipase A2 1 (151 aa).

The signal sequence occupies residues 1 to 21 (MNPAHLLVLSAVCVSLLGASS). A propeptide spanning residues 22-27 (IPPQPL) is cleaved from the precursor. Cystine bridges form between Cys-38/Cys-104, Cys-54/Cys-151, Cys-56/Cys-72, Cys-71/Cys-132, Cys-78/Cys-125, Cys-88/Cys-118, and Cys-111/Cys-123. The Ca(2+) site is built by Tyr-55, Gly-57, and Gly-59. Residue His-75 is part of the active site. Asp-76 is a binding site for Ca(2+). Asp-126 is a catalytic residue.

The cofactor is Ca(2+). In terms of tissue distribution, expressed by the venom gland.

It localises to the secreted. The enzyme catalyses a 1,2-diacyl-sn-glycero-3-phosphocholine + H2O = a 1-acyl-sn-glycero-3-phosphocholine + a fatty acid + H(+). In terms of biological role, snake venom phospholipase A2 (PLA2) that may exhibit cardiotoxicity, myotoxicity, antiplatelet activity, and edema-inducing activity. PLA2 catalyzes the calcium-dependent hydrolysis of the 2-acyl groups in 3-sn-phosphoglycerides. The chain is Acidic phospholipase A2 1 from Ophiophagus hannah (King cobra).